The sequence spans 153 residues: D-erythrulose-4-phosphate isomerase 1 (153 aa).

Cys-69 acts as the Proton acceptor in catalysis.

This sequence belongs to the LacAB/RpiB family.

The enzyme catalyses D-erythrulose 4-phosphate = D-erythrose 4-phosphate. It functions in the pathway carbohydrate metabolism; erythritol degradation. It participates in carbohydrate metabolism; D-threitol degradation. Catalyzes the isomerization of D-erythrulose-4P to D-erythrose-4P. Involved in the degradation pathways of erythritol and D-threitol, that allow M.smegmatis to grow on these compounds as the sole carbon source. This is D-erythrulose-4-phosphate isomerase 1 from Mycolicibacterium smegmatis (strain ATCC 700084 / mc(2)155) (Mycobacterium smegmatis).